We begin with the raw amino-acid sequence, 243 residues long: Proteasome subunit beta (243 aa).

Composition is skewed to basic and acidic residues over residues 1–11 (MRTPTHDEFSG) and 33–47 (NADR…KETK). The propeptide at 1-49 (MRTPTHDEFSGRLDSLNGDRSNVFGPELGEFSNADRRADELGDKETKTG) is removed in mature form; by autocatalysis. Residues 1–50 (MRTPTHDEFSGRLDSLNGDRSNVFGPELGEFSNADRRADELGDKETKTGT) are disordered. T50 (nucleophile) is an active-site residue. Position 129 is a phosphoserine (S129).

Belongs to the peptidase T1B family. The 20S proteasome core is composed of 14 alpha and 14 beta subunits that assemble into four stacked heptameric rings, resulting in a barrel-shaped structure. The two inner rings, each composed of seven catalytic beta subunits, are sandwiched by two outer rings, each composed of seven alpha subunits. H.volcanii produces at least 2 types of 20S proteasomes: an alpha1-beta proteasome and a proteasome containing all three subunits (alpha1, alpha2, and beta) that appears to be asymmetrical with homo-oligomeric alpha1 and alpha2 rings positioned on separate ends. The catalytic chamber with the active sites is on the inside of the barrel. Has probably a gated structure, the ends of the cylinder being occluded by the N-termini of the alpha-subunits. Is likely capped at one or both ends by the proteasome regulatory ATPase, PAN.

The protein localises to the cytoplasm. The catalysed reaction is Cleavage of peptide bonds with very broad specificity.. With respect to regulation, the formation of the proteasomal ATPase PAN-20S proteasome complex, via the docking of the C-termini of PAN into the intersubunit pockets in the alpha-rings, triggers opening of the gate for substrate entry. Interconversion between the open-gate and close-gate conformations leads to a dynamic regulation of the 20S proteasome proteolysis activity. In vitro, the chymotrypsin-like activity of the alpha1-beta proteasome is potently inhibited by carbobenzoxyl-leucinyl-leucinyl-leucinal-H (MG132) and significantly by N-acetyl-leucinyl-leucinyl-norleucinal-H (calpain inhibitor I). Component of the proteasome core, a large protease complex with broad specificity involved in protein degradation. The H.volcanii alpha1-beta proteasome is able to cleave oligopeptides after Phe, Tyr and Trp, poorly after Glu but not after Arg. Thus, displays chymotrypsin-like activity, low caspase-like activity but no trypsin-like activity. The protein is Proteasome subunit beta of Haloferax volcanii (strain ATCC 29605 / DSM 3757 / JCM 8879 / NBRC 14742 / NCIMB 2012 / VKM B-1768 / DS2) (Halobacterium volcanii).